We begin with the raw amino-acid sequence, 78 residues long: Small ribosomal subunit protein uS17 (78 aa).

This sequence belongs to the universal ribosomal protein uS17 family. As to quaternary structure, part of the 30S ribosomal subunit.

Its function is as follows. One of the primary rRNA binding proteins, it binds specifically to the 5'-end of 16S ribosomal RNA. In Pelagibacter ubique (strain HTCC1062), this protein is Small ribosomal subunit protein uS17.